Reading from the N-terminus, the 401-residue chain is G2/mitotic-specific cyclin-B1 (401 aa).

Disordered regions lie at residues Met1–Lys30 and Lys84–Gly103. A compositionally biased stretch (polar residues) spans Arg9–Gly26.

It belongs to the cyclin family. Cyclin AB subfamily. In terms of assembly, interacts with the CDK1 protein kinase to form a serine/threonine kinase holoenzyme complex also known as maturation promoting factor (MPF). The cyclin subunit imparts substrate specificity to the complex.

Essential for the control of the cell cycle at the G2/M (mitosis) transition. The polypeptide is G2/mitotic-specific cyclin-B1 (ccnb1) (Oryzias javanicus (Javanese ricefish)).